A 430-amino-acid polypeptide reads, in one-letter code: Glutamate-1-semialdehyde 2,1-aminomutase (430 aa).

Lys-267 is subject to N6-(pyridoxal phosphate)lysine.

This sequence belongs to the class-III pyridoxal-phosphate-dependent aminotransferase family. HemL subfamily. In terms of assembly, homodimer. It depends on pyridoxal 5'-phosphate as a cofactor.

The protein localises to the cytoplasm. It catalyses the reaction (S)-4-amino-5-oxopentanoate = 5-aminolevulinate. The protein operates within porphyrin-containing compound metabolism; protoporphyrin-IX biosynthesis; 5-aminolevulinate from L-glutamyl-tRNA(Glu): step 2/2. The protein is Glutamate-1-semialdehyde 2,1-aminomutase of Thermomicrobium roseum (strain ATCC 27502 / DSM 5159 / P-2).